We begin with the raw amino-acid sequence, 453 residues long: Chromosomal replication initiator protein DnaA (453 aa).

The domain I, interacts with DnaA modulators stretch occupies residues 1–71 (MSEKEIWEKV…QAILFDVVGY (71 aa)). Positions 71–114 (YEVKPHFITTEELANYSNNETATPKETTKPSTETTEDNHVLGRE) are domain II. The segment at 115–331 (QFNAHNTFDT…GALTRLLAYS (217 aa)) is domain III, AAA+ region. Glycine 159, glycine 161, lysine 162, and threonine 163 together coordinate ATP. Residues 332–453 (QLLGKPITTE…ENLEKEIRNV (122 aa)) form a domain IV, binds dsDNA region.

It belongs to the DnaA family. Oligomerizes as a right-handed, spiral filament on DNA at oriC.

The protein resides in the cytoplasm. Plays an essential role in the initiation and regulation of chromosomal replication. ATP-DnaA binds to the origin of replication (oriC) to initiate formation of the DNA replication initiation complex once per cell cycle. Binds the DnaA box (a 9 base pair repeat at the origin) and separates the double-stranded (ds)DNA. Forms a right-handed helical filament on oriC DNA; dsDNA binds to the exterior of the filament while single-stranded (ss)DNA is stabiized in the filament's interior. The ATP-DnaA-oriC complex binds and stabilizes one strand of the AT-rich DNA unwinding element (DUE), permitting loading of DNA polymerase. After initiation quickly degrades to an ADP-DnaA complex that is not apt for DNA replication. Binds acidic phospholipids. In Staphylococcus aureus (strain Mu3 / ATCC 700698), this protein is Chromosomal replication initiator protein DnaA.